Reading from the N-terminus, the 738-residue chain is DNA topoisomerase 4 subunit A (738 aa).

In terms of domain architecture, Topo IIA-type catalytic spans 32 to 496; sequence LPDVRDGLKP…SFEEVDLTNQ (465 aa). Tyrosine 120 serves as the catalytic O-(5'-phospho-DNA)-tyrosine intermediate.

This sequence belongs to the type II topoisomerase GyrA/ParC subunit family. ParC type 1 subfamily. Heterotetramer composed of ParC and ParE.

It localises to the cell membrane. The catalysed reaction is ATP-dependent breakage, passage and rejoining of double-stranded DNA.. Topoisomerase IV is essential for chromosome segregation. It relaxes supercoiled DNA. Performs the decatenation events required during the replication of a circular DNA molecule. The sequence is that of DNA topoisomerase 4 subunit A from Rickettsia prowazekii (strain Madrid E).